Consider the following 202-residue polypeptide: Thymidylate kinase (202 aa).

Residue 13-20 (GTDGAGKS) participates in ATP binding.

Belongs to the thymidylate kinase family.

The catalysed reaction is dTMP + ATP = dTDP + ADP. Phosphorylation of dTMP to form dTDP in both de novo and salvage pathways of dTTP synthesis. The sequence is that of Thymidylate kinase from Desulfotalea psychrophila (strain LSv54 / DSM 12343).